We begin with the raw amino-acid sequence, 428 residues long: Trigger factor (428 aa).

A PPIase FKBP-type domain is found at 163–248 (GDTAVIDFEG…VHEVKAKQLP (86 aa)).

It belongs to the FKBP-type PPIase family. Tig subfamily.

Its subcellular location is the cytoplasm. The catalysed reaction is [protein]-peptidylproline (omega=180) = [protein]-peptidylproline (omega=0). Involved in protein export. Acts as a chaperone by maintaining the newly synthesized protein in an open conformation. Functions as a peptidyl-prolyl cis-trans isomerase. This chain is Trigger factor, found in Geobacillus thermodenitrificans (strain NG80-2).